The primary structure comprises 113 residues: U11-theraphotoxin-Hhn1a (113 aa).

The signal sequence occupies residues 1-21 (MNTVRVTFLLVFVLAVSLGRA). Positions 22 to 74 (DKEENRMEMQEKTEQGKSYLDFAENLLLQKLEELEAKLLEEDSEESRNSRQKR) are excised as a propeptide. Positions 61 to 83 (EEDSEESRNSRQKRCIGEGVPCD) are disordered. 3 cysteine pairs are disulfide-bonded: cysteine 75/cysteine 90, cysteine 82/cysteine 95, and cysteine 89/cysteine 110.

The protein belongs to the neurotoxin 14 (magi-1) family. 01 (HNTX-16) subfamily. Expressed by the venom gland.

The protein resides in the secreted. Probable ion channel inhibitor. This Cyriopagopus hainanus (Chinese bird spider) protein is U11-theraphotoxin-Hhn1a.